A 193-amino-acid polypeptide reads, in one-letter code: Flagellar transcriptional regulator FlhC (193 aa).

Residues C137, C140, C158, and C161 each contribute to the Zn(2+) site.

This sequence belongs to the FlhC family. In terms of assembly, heterohexamer composed of two FlhC and four FlhD subunits. Each FlhC binds a FlhD dimer, forming a heterotrimer, and a hexamer assembles by dimerization of two heterotrimers. Zn(2+) is required as a cofactor.

The protein resides in the cytoplasm. Functionally, functions in complex with FlhD as a master transcriptional regulator that regulates transcription of several flagellar and non-flagellar operons by binding to their promoter region. Activates expression of class 2 flagellar genes, including fliA, which is a flagellum-specific sigma factor that turns on the class 3 genes. Also regulates genes whose products function in a variety of physiological pathways. The sequence is that of Flagellar transcriptional regulator FlhC from Pectobacterium carotovorum (Erwinia carotovora).